The chain runs to 887 residues: Alanine--tRNA ligase (887 aa).

Residues H581, H585, C683, and H687 each coordinate Zn(2+).

It belongs to the class-II aminoacyl-tRNA synthetase family. Zn(2+) serves as cofactor.

It localises to the cytoplasm. The enzyme catalyses tRNA(Ala) + L-alanine + ATP = L-alanyl-tRNA(Ala) + AMP + diphosphate. Catalyzes the attachment of alanine to tRNA(Ala) in a two-step reaction: alanine is first activated by ATP to form Ala-AMP and then transferred to the acceptor end of tRNA(Ala). Also edits incorrectly charged Ser-tRNA(Ala) and Gly-tRNA(Ala) via its editing domain. The chain is Alanine--tRNA ligase from Ehrlichia chaffeensis (strain ATCC CRL-10679 / Arkansas).